The primary structure comprises 103 residues: Small ribosomal subunit protein uS10 (103 aa).

The protein belongs to the universal ribosomal protein uS10 family. Part of the 30S ribosomal subunit.

Involved in the binding of tRNA to the ribosomes. The protein is Small ribosomal subunit protein uS10 of Neisseria gonorrhoeae (strain ATCC 700825 / FA 1090).